Consider the following 481-residue polypeptide: 3-isopropylmalate dehydratase large subunit (481 aa).

C357, C417, and C420 together coordinate [4Fe-4S] cluster. Positions 429-441 are enriched in polar residues; sequence SPGQRCASTSNRN. Positions 429 to 451 are disordered; the sequence is SPGQRCASTSNRNFEGRQGKGGR.

Belongs to the aconitase/IPM isomerase family. LeuC type 1 subfamily. As to quaternary structure, heterodimer of LeuC and LeuD. [4Fe-4S] cluster serves as cofactor.

The catalysed reaction is (2R,3S)-3-isopropylmalate = (2S)-2-isopropylmalate. Its pathway is amino-acid biosynthesis; L-leucine biosynthesis; L-leucine from 3-methyl-2-oxobutanoate: step 2/4. In terms of biological role, catalyzes the isomerization between 2-isopropylmalate and 3-isopropylmalate, via the formation of 2-isopropylmaleate. In Mycobacterium sp. (strain KMS), this protein is 3-isopropylmalate dehydratase large subunit.